We begin with the raw amino-acid sequence, 62 residues long: Photosystem II reaction center protein Z (62 aa).

2 helical membrane passes run 8–28 (AVFA…VVLA) and 41–61 (FSGA…NSFI).

Belongs to the PsbZ family. In terms of assembly, PSII is composed of 1 copy each of membrane proteins PsbA, PsbB, PsbC, PsbD, PsbE, PsbF, PsbH, PsbI, PsbJ, PsbK, PsbL, PsbM, PsbT, PsbY, PsbZ, Psb30/Ycf12, at least 3 peripheral proteins of the oxygen-evolving complex and a large number of cofactors. It forms dimeric complexes.

It is found in the plastid. The protein resides in the chloroplast thylakoid membrane. May control the interaction of photosystem II (PSII) cores with the light-harvesting antenna, regulates electron flow through the 2 photosystem reaction centers. PSII is a light-driven water plastoquinone oxidoreductase, using light energy to abstract electrons from H(2)O, generating a proton gradient subsequently used for ATP formation. The protein is Photosystem II reaction center protein Z of Anthoceros angustus (Hornwort).